Reading from the N-terminus, the 156-residue chain is ATP synthase subunit b (156 aa).

Residues 13 to 33 (AFIIFVWFCMKFVWPPLMNAI) traverse the membrane as a helical segment.

It belongs to the ATPase B chain family. F-type ATPases have 2 components, F(1) - the catalytic core - and F(0) - the membrane proton channel. F(1) has five subunits: alpha(3), beta(3), gamma(1), delta(1), epsilon(1). F(0) has three main subunits: a(1), b(2) and c(10-14). The alpha and beta chains form an alternating ring which encloses part of the gamma chain. F(1) is attached to F(0) by a central stalk formed by the gamma and epsilon chains, while a peripheral stalk is formed by the delta and b chains.

The protein resides in the cell inner membrane. Its function is as follows. F(1)F(0) ATP synthase produces ATP from ADP in the presence of a proton or sodium gradient. F-type ATPases consist of two structural domains, F(1) containing the extramembraneous catalytic core and F(0) containing the membrane proton channel, linked together by a central stalk and a peripheral stalk. During catalysis, ATP synthesis in the catalytic domain of F(1) is coupled via a rotary mechanism of the central stalk subunits to proton translocation. Component of the F(0) channel, it forms part of the peripheral stalk, linking F(1) to F(0). The chain is ATP synthase subunit b from Shewanella woodyi (strain ATCC 51908 / MS32).